Reading from the N-terminus, the 3726-residue chain is Zinc finger homeobox protein 3 (3726 aa).

Disordered regions lie at residues 1–79 (MEGC…SKEV) and 95–129 (MEHHCPGTHPPPALREESASDTSEEGEEESDVENL). A C2H2-type 1 zinc finger spans residues 79-103 (VSCNECSASFSSLQTYMEHHCPGTH). Residues 116-126 (TSEEGEEESDV) show a composition bias toward acidic residues. The segment at 282-305 (LMCFLCKLSFGYVRSFVTHAVHDH) adopts a C2H2-type 2 zinc-finger fold. Positions 417–557 (SVPLGPLASS…GPASTTSNSA (141 aa)) are disordered. Ser426 carries the post-translational modification Phosphoserine. At Thr428 the chain carries Phosphothreonine. Basic and acidic residues predominate over residues 431–459 (SEGKDSGAAEGDKQESGGHQDCFSEKVEP). Acidic residues-rich tracts occupy residues 460-491 (AEEEEAEEEEEEEEEAEEEEEEEEEEEEEEEE) and 500-510 (DLEEELEDSPS). The span at 528–557 (SNPSISNSPLMPNVLQTLSRGPASTTSNSA) shows a compositional bias: polar residues. Phosphoserine is present on residues Ser535 and Ser573. The tract at residues 590 to 621 (DFADESANKDSATAPEPNESTEGDDGGFVPHH) is disordered. 3 C2H2-type zinc fingers span residues 641 to 664 (VECPKCDTVLGSSRSLGGHMTMMH), 672 to 695 (LKCPKCNWHYKYQQTLEAHMKEKH), and 727 to 751 (FRCEVCNYSTTTKGNLSIHMQSDKH). The C2H2-type 6; atypical zinc-finger motif lies at 805-829 (WRCEVCDYETNVARNLRIHMTSEKH). A C2H2-type 7; degenerate zinc finger spans residues 946–969 (FQCAVCNKFTTDNLDMLGLHMNVE). The C2H2-type 8; atypical zinc finger occupies 985–1009 (YQCKLCRYNTQLKANFQLHCKTDKH). The segment at 1041–1065 (LKCNACDYYTNSLEKLRLHTVNSRH) adopts a C2H2-type 9; atypical zinc-finger fold. Residues 1089–1113 (YHCVLCNYSTKAKLNLIQHVRSMKH) form a C2H2-type 10; atypical zinc finger. The disordered stretch occupies residues 1125–1228 (LQKGLPEEDE…KRPKASEEIK (104 aa)). Over residues 1149-1159 (DPEEPVEDAEG) the composition is skewed to acidic residues. 2 stretches are compositionally biased toward polar residues: residues 1175 to 1191 (GSGSEEGQSKRAASSSQ) and 1199 to 1217 (SPATTKRTSFPGSSETPLS). At Ser1207 the chain carries Phosphoserine. The segment at 1233–1256 (YQCPYCKYSNADVNRLRVHAMTQH) adopts a C2H2-type 11; atypical zinc-finger fold. The segment at 1262–1285 (LRCPLCQDMLNNKIHLQLHLTHLH) adopts a C2H2-type 12 zinc-finger fold. Residues 1320–1361 (DGNSTLEEVGKQPEASEDPGKNILPPASMEHGGDLKPTSADP) form a disordered region. 3 C2H2-type zinc fingers span residues 1370–1395 (FLCWKKGCNQVFKTSATLQTHFNEVH), 1411–1433 (YRCNQCSLAFKTIEKLQLHSQYH), and 1439–1462 (TMCCLCQRSFRTFQALKKHLETSH). Residues 1500-1539 (EEDKEEESDLEDKQSPTGSDSGSVQEDSGSEPKRALPFRK) are disordered. Polar residues predominate over residues 1514 to 1526 (SPTGSDSGSVQED). The C2H2-type 16 zinc finger occupies 1555–1579 (YKCTVCKESFTQKNILLVHYNSVSH). Ser1600 bears the Phosphoserine mark. The C2H2-type 17 zinc-finger motif lies at 1606-1630 (FKCNTCNVAYSQSSTLEIHMRSVLH). Disordered regions lie at residues 1639 to 1678 (LEAASGNSNGTGNSGGVSLSSSTPSPVGSSGANNTFTATN), 1706 to 1738 (NPISANIASPSEPKEANRKKLADMIASRQQQQQ), and 1866 to 1943 (LSQS…PRIA). Residues 1643–1669 (SGNSNGTGNSGGVSLSSSTPSPVGSSG) show a composition bias toward low complexity. Residues 1717–1727 (EPKEANRKKLA) are compositionally biased toward basic and acidic residues. Residues 1866–1878 (LSQSHSALLQPSQ) are compositionally biased toward low complexity. Basic and acidic residues predominate over residues 1879–1902 (HPEKKNKVVIKEKDKESQREREGP). The C2H2-type 18 zinc finger occupies 1990–2013 (LECDSCGKLFSNILILKSHQEHVH). 2 disordered regions span residues 2037–2089 (YPLR…AQPS) and 2211–2249 (NKDSPYNFSNPPITSLEELKIDSRPPSPEPQKQEYWGSK). The span at 2041 to 2066 (PQTPEPPPPPPPPPPPPLPTAPPQPA) shows a compositional bias: pro residues. The homeobox 1 DNA-binding region spans 2152-2211 (NKRPRTRITDDQLRVLRQYFDINNSPSEEQIKEMADKSGLPQKVIKHWFRNTLFKERQRN). Polar residues predominate over residues 2214–2223 (SPYNFSNPPI). Positions 2249–2308 (KRSSRTRFTDYQLRVLQDFFDANAYPKDDEFEQLSNLLNLPTRVIVVWFQNARQKARKNY) form a DNA-binding region, homeobox 2. The segment at 2335–2358 (YQCKKCSLVFQRIFDLIKHQKKLC) adopts a C2H2-type 19; atypical zinc-finger fold. A Glycyl lysine isopeptide (Lys-Gly) (interchain with G-Cter in SUMO1) cross-link involves residue Lys2356. Disordered stretches follow at residues 2383–2405 (TPTSSSCSTPMPSQAYSTPAPSA) and 2429–2529 (NSKA…PQQL). A compositionally biased stretch (low complexity) spans 2458-2478 (QPKPEMQQQLEQLEQKTNAPQ). Over residues 2479-2507 (PKLPQPAAPSLPQPPPQAPPPQCPLPQSS) the composition is skewed to pro residues. Residues 2508–2521 (PSPSQLSHLPLKPL) show a composition bias toward low complexity. Residues 2539–2561 (YQCDQCKLAFPSFEHWQEHQQLH) form a C2H2-type 20 zinc finger. Positions 2624 to 2626 (KRK) match the Nuclear localization signal motif. The interval 2628 to 2656 (EEKASASPGENDSGTGGEEPQRDKRLRTT) is disordered. Phosphoserine is present on Ser2634. Residues 2650-2709 (DKRLRTTITPEQLEILYQKYLLDSNPTRKMLDHIAHEVGLKKRVVQVWFQNTRARERKGQ) constitute a DNA-binding region (homeobox 3). A C2H2-type 21 zinc finger spans residues 2720-2743 (RRCPFCRALFKAKTALEAHIRSRH). Over residues 2780 to 2789 (SHLPPSSSDG) the composition is skewed to polar residues. Residues 2780 to 2805 (SHLPPSSSDGQGVPLSPVSKTMELSP) are disordered. Phosphoserine occurs at positions 2795 and 2804. A Glycyl lysine isopeptide (Lys-Gly) (interchain with G-Cter in SUMO1); alternate cross-link involves residue Lys2815. Lys2815 is covalently cross-linked (Glycyl lysine isopeptide (Lys-Gly) (interchain with G-Cter in SUMO2); alternate). Positions 2850–2877 (AITDTTTGDEGNADNDSATGIATETKSS) are disordered. 2 positions are modified to phosphoserine: Ser2900 and Ser2904. The tract at residues 2920 to 2955 (VDYSETSSLADPCSPSPGASGSAGKSGDGGDRPGQK) is disordered. Low complexity predominate over residues 2929-2944 (ADPCSPSPGASGSAGK). The segment at residues 2952 to 3011 (PGQKRFRTQMTNLQLKVLKSCFNDYRTPTMLECEVLGNDIGLPKRVVQVWFQNARAKEKK) is a DNA-binding region (homeobox 4). A C2H2-type 22 zinc finger spans residues 3032–3056 (TECTLCGIKYSARLSVRDHIFSQQH). Disordered stretches follow at residues 3145 to 3274 (FTPA…AGTG) and 3415 to 3476 (QQQQ…SASA). The segment covering 3147-3156 (PANTALTSPK) has biased composition (polar residues). A compositionally biased stretch (low complexity) spans 3181–3199 (PSSASLSSPTPAQATMAMA). Positions 3200-3221 (PQPPPQPQQPQPPVQQPPPPPA) are enriched in pro residues. A compositionally biased stretch (low complexity) spans 3222–3234 (AQQIPAPQLTPQQ). Residues 3235-3267 (QRKDKDGEKGKEKEKAHKGKGEPLPVPKKEKGE) are compositionally biased toward basic and acidic residues. Lys3262 is covalently cross-linked (Glycyl lysine isopeptide (Lys-Gly) (interchain with G-Cter in SUMO1)). Ser3434 carries the post-translational modification Phosphoserine. Residues 3435 to 3453 (PDKDPAKESPKPEEQKNVP) are compositionally biased toward basic and acidic residues. Residue Ser3457 is modified to Phosphoserine. The segment at 3552–3576 (YHCLACESALCGEEALSQHLESALH) adopts a C2H2-type 23 zinc-finger fold. Residues 3588 to 3726 (AKEHPSLLPH…TSVGTDTFRL (139 aa)) form a disordered region. Low complexity-rich tracts occupy residues 3605 to 3618 (STASTSQSAAHSND) and 3645 to 3677 (SRASAAKPPSFPPLSSSSTVTSSSCSTSGVQPS). A Phosphoserine modification is found at Ser3616. Phosphoserine is present on Ser3700. Residues 3715-3726 (GLTSVGTDTFRL) show a composition bias toward polar residues.

As to quaternary structure, interacts with ALKBH4 and PIAS3. Interacts with FNBP3. Interacts with ESR1, RUNX3, TRIM25, SMAD2 and SMAD3. Phosphorylated at Ser-2634 in both embryonic and adult brain. Phosphorylation at Ser-1600, Ser-2795, Ser-2804, Ser-2900, Ser-3434, Ser-3616 and Ser-3700 is restricted to the embryonic brain. Hyperphosphorylation in embryonic brain protects ZFHX3 from calpain/CAPN1-mediated degradation. Post-translationally, ubiquitinated, leading to its proteasomal degradation. In terms of processing, nuclear localization is essential for its sumoylation. Expressed in suprachiasmatic nucleus (SCN) of the brain (at protein level). Expressed in skeletal muscle. Levels of expression are high in myoblasts but low in differentiated muscle. Expressed in the heart, primarily in the atria.

It is found in the nucleus. The protein localises to the cytoplasm. Functionally, transcriptional regulator which can act as an activator or a repressor. Inhibits the enhancer element of the AFP gene by binding to its AT-rich core sequence. In concert with SMAD-dependent TGF-beta signaling can repress the transcription of AFP via its interaction with SMAD2/3. Regulates the circadian locomotor rhythms via transcriptional activation of neuropeptidergic genes which are essential for intercellular synchrony and rhythm amplitude in the suprachiasmatic nucleus (SCN) of the brain. Regulator of myoblasts differentiation through the binding to the AT-rich sequence of MYF6 promoter and promoter repression. Down-regulates the MUC5AC promoter in gastric cancer. In association with RUNX3, up-regulates CDKN1A promoter activity following TGF-beta stimulation. The protein is Zinc finger homeobox protein 3 (Zfhx3) of Mus musculus (Mouse).